Here is a 1211-residue protein sequence, read N- to C-terminus: PH domain-containing protein DDB_G0287875 (1211 aa).

The Ras-associating 1 domain occupies 5–90 (QKKILKVFDQ…YKFFFLNPNG (86 aa)). The span at 103–112 (KSQSASTSGS) shows a compositional bias: polar residues. Residues 103 to 133 (KSQSASTSGSAPPKKEPPKPQELQQKQHISK) form a disordered region. In terms of domain architecture, PH spans 132–223 (SKGKSGWLLR…WAQELQATMN (92 aa)). 2 consecutive Calponin-homology (CH) domains span residues 277–384 (TTLV…VGYF) and 392–502 (FNMR…LSGQ). 2 disordered regions span residues 520–941 (VEPE…TESV) and 973–1110 (TSAT…PKNT). Positions 527-572 (SIRDKQLKLMREKKEEEDRLKKEKEEKEKEEKEKLEKESSAAAAAT) form a coiled coil. A compositionally biased stretch (basic and acidic residues) spans 528 to 565 (IRDKQLKLMREKKEEEDRLKKEKEEKEKEEKEKLEKES). 4 stretches are compositionally biased toward low complexity: residues 566–596 (SAAA…PLKK), 607–646 (PPTV…TLTP), 655–668 (KKPA…KPVA), and 676–691 (PSSS…TTPS). Residues 703–729 (QLEKEKQDRLEKARLEKEKAEKEEQEF) are compositionally biased toward basic and acidic residues. Residues 703 to 847 (QLEKEKQDRL…ERKHDENDMD (145 aa)) adopt a coiled-coil conformation. Positions 744–753 (LLEQQKQQQE) are enriched in low complexity. 2 stretches are compositionally biased toward basic and acidic residues: residues 754–778 (GQER…QRQI) and 786–853 (EARI…KLLE). The segment covering 862-877 (PTITPPQSLHSSQIIR) has biased composition (polar residues). Residues 880-909 (IEEDDQTNSELEMFQNEYNRLQDEEEHINS) are a coiled coil. 2 stretches are compositionally biased toward low complexity: residues 914 to 936 (GSSG…GASS) and 976 to 1010 (TTSD…TNNN). Polar residues predominate over residues 1032–1048 (TKEQQSIIDKQTGLVSK). Positions 1048 to 1076 (KQSTNNESNEQQQQQQQQQQLQQQQSSQN) form a coiled coil. Residues 1049–1083 (QSTNNESNEQQQQQQQQQQLQQQQSSQNSTTSIST) are compositionally biased toward low complexity. A compositionally biased stretch (basic and acidic residues) spans 1093–1104 (NEEKEKESEPHK). In terms of domain architecture, Ras-associating 2 spans 1112-1196 (GRVVVRICLE…DRFVFKKNDI (85 aa)).

The sequence is that of PH domain-containing protein DDB_G0287875 from Dictyostelium discoideum (Social amoeba).